A 366-amino-acid polypeptide reads, in one-letter code: NADH-quinone oxidoreductase subunit D (366 aa).

This sequence belongs to the complex I 49 kDa subunit family. NDH-1 is composed of 14 different subunits. Subunits NuoB, C, D, E, F, and G constitute the peripheral sector of the complex.

The protein resides in the cell membrane. The catalysed reaction is a quinone + NADH + 5 H(+)(in) = a quinol + NAD(+) + 4 H(+)(out). Its function is as follows. NDH-1 shuttles electrons from NADH, via FMN and iron-sulfur (Fe-S) centers, to quinones in the respiratory chain. The immediate electron acceptor for the enzyme in this species is believed to be a menaquinone. Couples the redox reaction to proton translocation (for every two electrons transferred, four hydrogen ions are translocated across the cytoplasmic membrane), and thus conserves the redox energy in a proton gradient. This Bacillus thuringiensis subsp. konkukian (strain 97-27) protein is NADH-quinone oxidoreductase subunit D.